Here is a 383-residue protein sequence, read N- to C-terminus: tRNA-specific 2-thiouridylase MnmA (383 aa).

Residues 11–18 (GLSGGVDS) and Met37 contribute to the ATP site. Residues 97–99 (NPD) form an interaction with target base in tRNA region. Cys102 acts as the Nucleophile in catalysis. Cys102 and Cys200 are joined by a disulfide. Gly127 serves as a coordination point for ATP. An interaction with tRNA region spans residues 150 to 152 (KDQ). The active-site Cysteine persulfide intermediate is Cys200. Residues 312-313 (RY) form an interaction with tRNA region. The interval 361 to 383 (IDTAHPADRSAPPALQTQSTEVV) is disordered.

It belongs to the MnmA/TRMU family.

The protein localises to the cytoplasm. The enzyme catalyses S-sulfanyl-L-cysteinyl-[protein] + uridine(34) in tRNA + AH2 + ATP = 2-thiouridine(34) in tRNA + L-cysteinyl-[protein] + A + AMP + diphosphate + H(+). In terms of biological role, catalyzes the 2-thiolation of uridine at the wobble position (U34) of tRNA, leading to the formation of s(2)U34. In Halorhodospira halophila (strain DSM 244 / SL1) (Ectothiorhodospira halophila (strain DSM 244 / SL1)), this protein is tRNA-specific 2-thiouridylase MnmA.